A 175-amino-acid chain; its full sequence is NADH dehydrogenase [ubiquinone] iron-sulfur protein 4, mitochondrial (175 aa).

The N-terminal 42 residues, methionine 1–leucine 42, are a transit peptide targeting the mitochondrion. The segment at lysine 151–lysine 175 is disordered. Serine 173 is modified (phosphoserine; by PKA).

The protein belongs to the complex I NDUFS4 subunit family. Mammalian complex I is composed of 45 different subunits. This is a component of the iron-sulfur (IP) fragment of the enzyme. Interacts with BCAP31 and TOMM40; the interaction mediates its translocation to the mitochondria; the interaction with BCAP31 is direct.

It localises to the mitochondrion inner membrane. Functionally, accessory subunit of the mitochondrial membrane respiratory chain NADH dehydrogenase (Complex I), that is believed not to be involved in catalysis. Complex I functions in the transfer of electrons from NADH to the respiratory chain. The immediate electron acceptor for the enzyme is believed to be ubiquinone. This chain is NADH dehydrogenase [ubiquinone] iron-sulfur protein 4, mitochondrial (NDUFS4), found in Homo sapiens (Human).